The following is a 274-amino-acid chain: Ribosomal RNA small subunit methyltransferase A (274 aa).

His-15, Leu-17, Gly-42, Glu-64, Asp-89, and Asn-108 together coordinate S-adenosyl-L-methionine.

This sequence belongs to the class I-like SAM-binding methyltransferase superfamily. rRNA adenine N(6)-methyltransferase family. RsmA subfamily.

It localises to the cytoplasm. The catalysed reaction is adenosine(1518)/adenosine(1519) in 16S rRNA + 4 S-adenosyl-L-methionine = N(6)-dimethyladenosine(1518)/N(6)-dimethyladenosine(1519) in 16S rRNA + 4 S-adenosyl-L-homocysteine + 4 H(+). Its function is as follows. Specifically dimethylates two adjacent adenosines (A1518 and A1519) in the loop of a conserved hairpin near the 3'-end of 16S rRNA in the 30S particle. May play a critical role in biogenesis of 30S subunits. The sequence is that of Ribosomal RNA small subunit methyltransferase A from Prochlorococcus marinus (strain MIT 9301).